The following is a 520-amino-acid chain: FNIP repeat-containing protein DDB_G0274063/DDB_G0272642 (520 aa).

Disordered regions lie at residues Q47 to R86 and N100 to S121. Over residues N51–D84 the composition is skewed to low complexity. FNIP repeat units follow at residues Y242 to S285, F286 to S331, Y332 to Q406, and F453 to S496.

This is FNIP repeat-containing protein DDB_G0274063/DDB_G0272642 from Dictyostelium discoideum (Social amoeba).